The chain runs to 71 residues: Translation initiation factor IF-1 (71 aa).

The S1-like domain maps to 1-71 (MSKDDLIQFT…LTKGRVIHRH (71 aa)).

Belongs to the IF-1 family. Component of the 30S ribosomal translation pre-initiation complex which assembles on the 30S ribosome in the order IF-2 and IF-3, IF-1 and N-formylmethionyl-tRNA(fMet); mRNA recruitment can occur at any time during PIC assembly.

It is found in the cytoplasm. In terms of biological role, one of the essential components for the initiation of protein synthesis. Stabilizes the binding of IF-2 and IF-3 on the 30S subunit to which N-formylmethionyl-tRNA(fMet) subsequently binds. Helps modulate mRNA selection, yielding the 30S pre-initiation complex (PIC). Upon addition of the 50S ribosomal subunit IF-1, IF-2 and IF-3 are released leaving the mature 70S translation initiation complex. This Rickettsia conorii (strain ATCC VR-613 / Malish 7) protein is Translation initiation factor IF-1.